A 363-amino-acid polypeptide reads, in one-letter code: uncharacterized protein (363 aa).

The N-terminal stretch at 1 to 20 (MKRAPLITGLLLISTSCAYA) is a signal peptide.

The protein belongs to the fimbrial protein family.

Its subcellular location is the fimbrium. In terms of biological role, part of the yraHIJK fimbrial operon. Could contribute to adhesion to various surfaces in specific environmental niches. Increases adhesion to eukaryotic T24 bladder epithelial cells in the absence of fim operon. This is an uncharacterized protein from Escherichia coli (strain K12).